A 593-amino-acid polypeptide reads, in one-letter code: Chromosomal replication initiator protein DnaA (593 aa).

The interval 1 to 71 is domain I, interacts with DnaA modulators; it reads MSDPCWEQCV…EIISNSDAGP (71 aa). Positions 71 to 256 are domain II; the sequence is PKSLEIAVAQ…DVEGGIQHKH (186 aa). Positions 97-186 are disordered; it reads AVPVPDPLPS…STESSADRER (90 aa). The span at 113-124 shows a compositional bias: polar residues; sequence SFQPPKGNTSAD. The interval 257 to 473 is domain III, AAA+ region; the sequence is NLNTTFIFDN…GALKRVIANA (217 aa). Residues Gly301, Gly303, Lys304, and Thr305 each contribute to the ATP site. The tract at residues 474–593 is domain IV, binds dsDNA; it reads QFTQRSISVE…VKNLLRTLTT (120 aa).

Belongs to the DnaA family. In terms of assembly, oligomerizes as a right-handed, spiral filament on DNA at oriC.

The protein localises to the cytoplasm. Its function is as follows. Plays an essential role in the initiation and regulation of chromosomal replication. ATP-DnaA binds to the origin of replication (oriC) to initiate formation of the DNA replication initiation complex once per cell cycle. Binds the DnaA box (a 9 base pair repeat at the origin) and separates the double-stranded (ds)DNA. Forms a right-handed helical filament on oriC DNA; dsDNA binds to the exterior of the filament while single-stranded (ss)DNA is stabiized in the filament's interior. The ATP-DnaA-oriC complex binds and stabilizes one strand of the AT-rich DNA unwinding element (DUE), permitting loading of DNA polymerase. After initiation quickly degrades to an ADP-DnaA complex that is not apt for DNA replication. Binds acidic phospholipids. In Teredinibacter turnerae (strain ATCC 39867 / T7901), this protein is Chromosomal replication initiator protein DnaA.